The primary structure comprises 474 residues: tRNA-2-methylthio-N(6)-dimethylallyladenosine synthase (474 aa).

In terms of domain architecture, MTTase N-terminal spans Lys-3–Gly-120. Cys-12, Cys-49, Cys-83, Cys-157, Cys-161, and Cys-164 together coordinate [4Fe-4S] cluster. Residues Arg-143–Ala-375 form the Radical SAM core domain. Residues Arg-378 to Arg-441 enclose the TRAM domain.

It belongs to the methylthiotransferase family. MiaB subfamily. Monomer. The cofactor is [4Fe-4S] cluster.

The protein localises to the cytoplasm. It carries out the reaction N(6)-dimethylallyladenosine(37) in tRNA + (sulfur carrier)-SH + AH2 + 2 S-adenosyl-L-methionine = 2-methylsulfanyl-N(6)-dimethylallyladenosine(37) in tRNA + (sulfur carrier)-H + 5'-deoxyadenosine + L-methionine + A + S-adenosyl-L-homocysteine + 2 H(+). In terms of biological role, catalyzes the methylthiolation of N6-(dimethylallyl)adenosine (i(6)A), leading to the formation of 2-methylthio-N6-(dimethylallyl)adenosine (ms(2)i(6)A) at position 37 in tRNAs that read codons beginning with uridine. The sequence is that of tRNA-2-methylthio-N(6)-dimethylallyladenosine synthase from Shigella boydii serotype 18 (strain CDC 3083-94 / BS512).